Here is a 513-residue protein sequence, read N- to C-terminus: Na(+)/H(+) antiporter NhaB (513 aa).

12 consecutive transmembrane segments (helical) span residues 23 to 43, 52 to 72, 97 to 117, 120 to 140, 144 to 164, 202 to 222, 238 to 258, 303 to 323, 348 to 368, 391 to 411, 447 to 467, and 475 to 495; these read LALI…PFVA, IFTL…LLAI, LLLM…LFIF, LLLS…AAAF, FLDA…FYGI, LMMH…VGEP, FFLR…LTCL, AIIG…VGLI, TESL…AVII, LFYI…VGTI, ATPN…APLI, and VWMA…CVEF.

The protein belongs to the NhaB Na(+)/H(+) (TC 2.A.34) antiporter family.

The protein resides in the cell inner membrane. The enzyme catalyses 2 Na(+)(in) + 3 H(+)(out) = 2 Na(+)(out) + 3 H(+)(in). Na(+)/H(+) antiporter that extrudes sodium in exchange for external protons. The protein is Na(+)/H(+) antiporter NhaB of Escherichia coli O6:H1 (strain CFT073 / ATCC 700928 / UPEC).